Here is a 441-residue protein sequence, read N- to C-terminus: Inner kinetochore subunit mis17 (441 aa).

The span at 160 to 173 (SSILENSPPNKVQR) shows a compositional bias: polar residues. The tract at residues 160 to 240 (SSILENSPPN…TSSMAPRNLL (81 aa)) is disordered. A compositionally biased stretch (low complexity) spans 174–183 (LSSLDSSQDS). Over residues 192–201 (VTGTTFSSQA) the composition is skewed to polar residues. Low complexity predominate over residues 217–233 (SLTNQSSSLQSSLQTSS).

This sequence belongs to the CENP-U/AME1 family. Component of the heterotetrameric kinetochore subcomplex COMA, which consists of fta2, fta7, mal2 and mis17. The COMA subcomplex is part of a larger constitutive centromere-associated network (CCAN) (also known as central kinetochore Sim4 complex in fission yeast), which is composed of at least cnl2, cnp3, cnp20, fta1, fta2, fta3, fta4, fta6, fta7, mal2, mhf1, mhf2, mis6, mis15, mis17, sim4 and wip1. Interacts with mis6 and mis15.

Its subcellular location is the nucleus. It localises to the chromosome. The protein resides in the centromere. The protein localises to the kinetochore. Its function is as follows. Component of the kinetochore, a multiprotein complex that assembles on centromeric DNA and attaches chromosomes to spindle microtubules, mediating chromosome segregation and sister chromatid segregation during meiosis and mitosis. Component of the inner kinetochore COMA complex, which connects centromere-associated proteins and the outer kinetochore. COMA interacts with other inner kinetochore proteins to form the inner kinetochore constitutive centromere-associated network (CCAN), which serves as a structural platform for outer kinetochore assembly. The sequence is that of Inner kinetochore subunit mis17 (mis17) from Schizosaccharomyces pombe (strain 972 / ATCC 24843) (Fission yeast).